Consider the following 270-residue polypeptide: Formamidopyrimidine-DNA glycosylase (270 aa).

Catalysis depends on P2, which acts as the Schiff-base intermediate with DNA. The active-site Proton donor is E3. The active-site Proton donor; for beta-elimination activity is K57. Residues H90, R109, and K151 each coordinate DNA. Residues 236–270 (RVYGRKGQACEVCESEIQSVTLGQRNTFFCEQCQK) form an FPG-type zinc finger. Catalysis depends on R260, which acts as the Proton donor; for delta-elimination activity.

The protein belongs to the FPG family. As to quaternary structure, monomer. Zn(2+) is required as a cofactor.

It catalyses the reaction Hydrolysis of DNA containing ring-opened 7-methylguanine residues, releasing 2,6-diamino-4-hydroxy-5-(N-methyl)formamidopyrimidine.. It carries out the reaction 2'-deoxyribonucleotide-(2'-deoxyribose 5'-phosphate)-2'-deoxyribonucleotide-DNA = a 3'-end 2'-deoxyribonucleotide-(2,3-dehydro-2,3-deoxyribose 5'-phosphate)-DNA + a 5'-end 5'-phospho-2'-deoxyribonucleoside-DNA + H(+). Its function is as follows. Involved in base excision repair of DNA damaged by oxidation or by mutagenic agents. Acts as a DNA glycosylase that recognizes and removes damaged bases. Has a preference for oxidized purines, such as 7,8-dihydro-8-oxoguanine (8-oxoG). Has AP (apurinic/apyrimidinic) lyase activity and introduces nicks in the DNA strand. Cleaves the DNA backbone by beta-delta elimination to generate a single-strand break at the site of the removed base with both 3'- and 5'-phosphates. The protein is Formamidopyrimidine-DNA glycosylase of Pseudoalteromonas atlantica (strain T6c / ATCC BAA-1087).